Consider the following 851-residue polypeptide: MIQQKVLFISLVAVALGLGLGLGLKESVEPQVSCRYRCNETFSKMASGCSCDDKCTERQACCQDYEDTCVLPTQSWSCSKLRCSEKRMANVLCSCSEDCLEKKDCCTDYKSICKGETSWLKDQCASSSAAQCPSGFEQSPLILFSMDGFRAGYLETWDSLMPNINKLKTCGTHAKYMRAVYPTKTFVNHYTIVTGLYPESHGIIDNNIYDVTLNLNFSLSAPTMTNPAWWGGQPIWHTVTYQGLKAATYFWPGSEVKINGSYPTIYKVYNKSIPFEARVTEVLKWLDLPKAERPDFVTLYIEEPDTTGHKFGPVSGEIIMALQMADRTLGMLMEGLKQRNLHNCVNLILLADHGMEQISCNRLEYMTDYFDKVDFFMYEGPAPRIRSKNVPKDFYTFDSEGIVRNLTCQKPKQYFKAYLAKDLPKRLHYVNNIRIDKVNLMVDQQWMAVRNKNYNRCNGGTHGYDNEFKSMQAIFLAHGPGFKGKNEVTSFENIEVYNLMCDLLKLKPAPNNGTHGSLNHLLKNPFYNPSPAKEQTSPLSCPFGPVPSPDVSGCKCSSITDLGKVNERLNLNNQAKTESEAHNLPYGRPQVLQNHSKYCLLHQAKYISAYSQDVLMPLWSSYTINKSPPTSVPPSASDCLRLDVRIPAAQSQTCSNYQPDLTITPGFLYPPNFGSSNFEQYDALITSNLVPMFKGFTRLWNYFHGTLLPKYARERNGLNVISGPIFDYNYDGHFDSYDTIKEYVNDTKIPIPTHFFVVLTSCENQINTPLNCPGSLKVLSFILPHRPDNSESCADTSPDNLWVEERIQTHTARVRDVELLTGLNFYSGLKQPLPETLQLKTFLPIFVNPVN.

An N-terminal signal peptide occupies residues 1–23 (MIQQKVLFISLVAVALGLGLGLG). SMB domains are found at residues 30–73 (PQVS…VLPT) and 74–118 (QSWS…GETS). 16 cysteine pairs are disulfide-bonded: Cys34–Cys38, Cys34–Cys51, Cys38–Cys69, Cys49–Cys51, Cys49–Cys62, Cys55–Cys61, Cys62–Cys69, Cys78–Cys83, Cys78–Cys95, Cys83–Cys113, Cys93–Cys95, Cys93–Cys106, Cys99–Cys105, Cys106–Cys113, Cys124–Cys170, and Cys132–Cys344. Asn39 carries an N-linked (GlcNAc...) asparagine glycan. Residues 58–60 (RQA) carry the Cell attachment site motif. A divalent metal cation-binding residues include Asp147 and Thr185. Thr185 serves as the catalytic AMP-threonine intermediate. Residues Asn216, Asn259, and Asn270 are each glycosylated (N-linked (GlcNAc...) asparagine). Lys271 serves as a coordination point for AMP. The a divalent metal cation site is built by Asp305, His309, Asp352, and His353. AMP is bound at residue His309. Disulfide bonds link Cys360/Cys457, Cys408/Cys793, Cys541/Cys599, Cys554/Cys654, Cys556/Cys639, and Cys762/Cys772. Asn405 carries an N-linked (GlcNAc...) asparagine glycan. His462 lines the a divalent metal cation pocket. Residues Asn512, Asn594, and Asn745 are each glycosylated (N-linked (GlcNAc...) asparagine).

Belongs to the nucleotide pyrophosphatase/phosphodiesterase family. In terms of assembly, monomer cleaved in two subunits; disulfide-linked. Is synthesized as a single-chain protein and is subsequently cleaved to form a two-subunit protein held together with disulfide bonds. The cofactor is a divalent metal cation. As to expression, expressed by venom gland.

Its subcellular location is the secreted. It carries out the reaction ADP + H2O = AMP + phosphate + H(+). Hydrolyzes ADP with high activity. Shows weak or no activity on 5'-AMP, 5'-GMP, 3'-AMP, ATP, cAMP, and cGMP. Is devoid of monophosphatase and proteinase activities. Dose-dependently inhibits platelet aggregation induced by ADP (IC(50)=0.99 uM) and collagen (IC(50)=1.4 uM). The protein is Venom phosphodiesterase of Macrovipera lebetinus (Levantine viper).